A 151-amino-acid chain; its full sequence is Arginine repressor (151 aa).

Belongs to the ArgR family.

The protein resides in the cytoplasm. Its pathway is amino-acid biosynthesis; L-arginine biosynthesis [regulation]. Functionally, regulates arginine biosynthesis genes. The polypeptide is Arginine repressor (Enterococcus faecalis (strain ATCC 700802 / V583)).